A 107-amino-acid chain; its full sequence is Putative pterin-4-alpha-carbinolamine dehydratase (107 aa).

Belongs to the pterin-4-alpha-carbinolamine dehydratase family.

It catalyses the reaction (4aS,6R)-4a-hydroxy-L-erythro-5,6,7,8-tetrahydrobiopterin = (6R)-L-erythro-6,7-dihydrobiopterin + H2O. This is Putative pterin-4-alpha-carbinolamine dehydratase from Paracoccus denitrificans (strain Pd 1222).